The sequence spans 847 residues: Receptor-like protein 12 (847 aa).

Residues 1–27 (MMIRSHRHWVFSSRIIIFLSLLVHSLA) form the signal peptide. Residues 28–798 (SSSPHFCRDD…LSEAEENMFN (771 aa)) lie on the Extracellular side of the membrane. Residues Asn52, Asn66, Asn103, and Asn132 are each glycosylated (N-linked (GlcNAc...) asparagine). LRR repeat units follow at residues 109-133 (LQYL…LGNL), 135-157 (HLTL…IGNL), 158-181 (NQLR…LGNL), 183-205 (RLVN…IGDL), 206-229 (KQLR…LGNL), 231-253 (NLVH…IGNL), 254-277 (IELR…FANL), 279-301 (KLSI…MSIF), 302-325 (HNLE…LLLI), 326-350 (PSLE…TSSS), 351-374 (TKLQ…ISRL), 375-398 (LNLE…ISKL), 400-422 (NLLH…LWRL), 424-442 (TMVL…SQEE), 443-466 (ALIE…ICKL), 467-491 (SSLG…RNFS), 492-514 (GSIK…IFSK), 516-539 (TELV…LINC), 541-562 (ALEL…WLES), 563-587 (LPSL…HASI), 589-613 (FQSL…YFSN), 657-681 (RRDF…LGYL), 682-704 (KELR…FLAN), 705-729 (LTKL…LAAL), and 731-754 (FLSY…QFQR). A glycan (N-linked (GlcNAc...) asparagine) is linked at Asn180. Asn210 and Asn228 each carry an N-linked (GlcNAc...) asparagine glycan. 3 N-linked (GlcNAc...) asparagine glycosylation sites follow: Asn263, Asn276, and Asn289. Asn346 carries an N-linked (GlcNAc...) asparagine glycan. A glycan (N-linked (GlcNAc...) asparagine) is linked at Asn386. Asn437 is a glycosylation site (N-linked (GlcNAc...) asparagine). Asn489 and Asn503 each carry an N-linked (GlcNAc...) asparagine glycan. A glycan (N-linked (GlcNAc...) asparagine) is linked at Asn601. 2 N-linked (GlcNAc...) asparagine glycosylation sites follow: Asn688 and Asn704. Residue Asn736 is glycosylated (N-linked (GlcNAc...) asparagine). The chain crosses the membrane as a helical span at residues 799-819 (WVAAAIAYGPGVLCGLVIGHF). Residues 820–847 (YTSHNHEWFTEKFGRKQHKALTSVKCSL) lie on the Cytoplasmic side of the membrane.

Belongs to the RLP family.

The protein localises to the cell membrane. Its function is as follows. Involved in the perception of CLV3 and CLV3-like peptides, that act as extracellular signals regulating meristems maintenance. This is Receptor-like protein 12 from Arabidopsis thaliana (Mouse-ear cress).